We begin with the raw amino-acid sequence, 308 residues long: S-crystallin SL18 (308 aa).

Positions 2 to 80 constitute a GST N-terminal domain; the sequence is PKYTLYYFNS…YLARQFGFYG (79 aa). Residues 165 to 205 form a disordered region; sequence EMRSQDSMVEPPSQKLSPELESQSSLCSERPQCGPPDPMMG. The segment covering 178–191 has biased composition (polar residues); the sequence is QKLSPELESQSSLC. The 124-residue stretch at 185–308 folds into the GST C-terminal domain; that stretch reads ESQSSLCSER…YFTLRNYTDF (124 aa).

This sequence belongs to the GST superfamily. Lens.

Functionally, S-crystallins are structural components of squids and octopi eye lens. Contains relatively little if any GST activity. In Nototodarus sloanii (Wellington flying squid), this protein is S-crystallin SL18.